Here is a 357-residue protein sequence, read N- to C-terminus: Glycerol-3-phosphate dehydrogenase [NAD(P)+] (357 aa).

4 residues coordinate NADPH: serine 30, phenylalanine 31, arginine 51, and lysine 124. The sn-glycerol 3-phosphate site is built by lysine 124 and glycine 152. Residue alanine 156 participates in NADPH binding. Sn-glycerol 3-phosphate-binding residues include lysine 207, aspartate 260, serine 270, arginine 271, and asparagine 272. Residue lysine 207 is the Proton acceptor of the active site. Arginine 271 contacts NADPH. An NADPH-binding site is contributed by glutamate 297.

Belongs to the NAD-dependent glycerol-3-phosphate dehydrogenase family.

It localises to the cytoplasm. The catalysed reaction is sn-glycerol 3-phosphate + NAD(+) = dihydroxyacetone phosphate + NADH + H(+). The enzyme catalyses sn-glycerol 3-phosphate + NADP(+) = dihydroxyacetone phosphate + NADPH + H(+). Its pathway is membrane lipid metabolism; glycerophospholipid metabolism. Its function is as follows. Catalyzes the reduction of the glycolytic intermediate dihydroxyacetone phosphate (DHAP) to sn-glycerol 3-phosphate (G3P), the key precursor for phospholipid synthesis. The chain is Glycerol-3-phosphate dehydrogenase [NAD(P)+] from Acinetobacter baumannii (strain SDF).